We begin with the raw amino-acid sequence, 416 residues long: MKIYLVGGAVRDSLLNLPIKDKDYLVVGATPEQMLQLGYRQVGKDFPVFLHPKNQQEYALARTERKIGLGYGGFSCHASPDVTLEQDLLRRDLTINAIAQDEKGNLYDPFNGIEDINARLLRHVSDAFVEDPLRVLRVARFAARFHALGFHIAAETLALMRQISASDELNALTAERVWQEVDKSLGGPHPEVFFEVLHQCGALEVLFPEIFALFGVPQPEKWHPEIDTGVHTLMVLAQAALLTEDKSVRFAALVHDLGKALSPKEHLPKHHGHGQKGLPLIKALCTRLRVPNETRDLALLVSDQHQNVHQAFELRAETIVKIFDKADFWRKPERLTQLILACIADMRGRTGFENNPYPQGEYLTQCFLAANNVDIAAIIAAGFQGAEIKQALNLRRIEAVSQFKQKMQTKLPTDEQ.

ATP-binding residues include Gly-8 and Arg-11. Gly-8 and Arg-11 together coordinate CTP. Positions 21 and 23 each coordinate Mg(2+). ATP-binding residues include Arg-91, Arg-137, and Arg-140. CTP is bound by residues Arg-91, Arg-137, and Arg-140. The 102-residue stretch at 228-329 folds into the HD domain; that stretch reads TGVHTLMVLA…VKIFDKADFW (102 aa).

Belongs to the tRNA nucleotidyltransferase/poly(A) polymerase family. Bacterial CCA-adding enzyme type 1 subfamily. In terms of assembly, monomer. Can also form homodimers and oligomers. It depends on Mg(2+) as a cofactor. Ni(2+) serves as cofactor.

The catalysed reaction is a tRNA precursor + 2 CTP + ATP = a tRNA with a 3' CCA end + 3 diphosphate. It carries out the reaction a tRNA with a 3' CCA end + 2 CTP + ATP = a tRNA with a 3' CCACCA end + 3 diphosphate. Catalyzes the addition and repair of the essential 3'-terminal CCA sequence in tRNAs without using a nucleic acid template. Adds these three nucleotides in the order of C, C, and A to the tRNA nucleotide-73, using CTP and ATP as substrates and producing inorganic pyrophosphate. tRNA 3'-terminal CCA addition is required both for tRNA processing and repair. Also involved in tRNA surveillance by mediating tandem CCA addition to generate a CCACCA at the 3' terminus of unstable tRNAs. While stable tRNAs receive only 3'-terminal CCA, unstable tRNAs are marked with CCACCA and rapidly degraded. This chain is Multifunctional CCA protein, found in Shewanella baltica (strain OS155 / ATCC BAA-1091).